We begin with the raw amino-acid sequence, 87 residues long: U15-lycotoxin-Ls1f (87 aa).

The signal sequence occupies residues 1–20 (MNSKIFAVLLLLAFLSCVLS). The 46-residue stretch at 21 to 66 (DQYCPKSSITACKKMNIRNDCCKDDDCTGGSWCCATPCGNFCKYPT) folds into the WAP domain. Disulfide bonds link C24–C54, C32–C58, C41–C53, C42–C80, and C47–C62.

This sequence belongs to the venom protein 11 family. 01 (wap-1) subfamily. Contains 5 disulfide bonds. In terms of tissue distribution, expressed by the venom gland.

It localises to the secreted. In terms of biological role, has antibacterial activity. This chain is U15-lycotoxin-Ls1f, found in Lycosa singoriensis (Wolf spider).